A 480-amino-acid polypeptide reads, in one-letter code: Glycogen synthase (480 aa).

Lys15 serves as a coordination point for ADP-alpha-D-glucose.

It belongs to the glycosyltransferase 1 family. Bacterial/plant glycogen synthase subfamily.

The catalysed reaction is [(1-&gt;4)-alpha-D-glucosyl](n) + ADP-alpha-D-glucose = [(1-&gt;4)-alpha-D-glucosyl](n+1) + ADP + H(+). Its pathway is glycan biosynthesis; glycogen biosynthesis. Functionally, synthesizes alpha-1,4-glucan chains using ADP-glucose. This Granulibacter bethesdensis (strain ATCC BAA-1260 / CGDNIH1) protein is Glycogen synthase.